We begin with the raw amino-acid sequence, 460 residues long: MPAAADTEEEQPMLPLPGAPSSSWAQFCQRFRALFSGADPRVCVAFWLFGLINNVLYVVILSAALDLVGPSVPKGVVLLADVIPSFATKLIAPYFIHMVPYPVRIIIFVFLSAAGMLLVALSPPYTDGGTIATKLAGIVLASLSSGGGELSFVGLTHFYGPFSLAAWGSGTGAAGLVGAGAYALATTSLGLSVKATLLASSCLPAVMVVSFFMVLPRSPLQPISAAYAGYRAVEEREELAEEREFMEGDRDATFDEQERLLGASVLSDQSKKAGWQRFKRDLKRVRGLFFPFMLPLLLVYVAEYTINQGVSPTLLFPLDESPFAHFRAFYPAYNAIYQVGVFISRSSTPFFRIHDLYLPSFLQILNLVLLTLQAVFNFIPSVYIIFIIIFWEGLLGGLVYVNTFAEIGDRVPKEDREFSLGATTVSDAAGICIAGFVSMVFEVWLCDWQVTHGRDYCRRI.

The next 11 membrane-spanning stretches (helical) occupy residues Val42–Ser62, Val76–Ile96, Ile105–Tyr125, Leu135–Leu155, Leu164–Leu184, Ala195–Leu215, Gly287–Asn307, Phe323–Ile343, Leu356–Phe376, Phe378–Leu398, and Ala428–Trp448.

The protein belongs to the battenin family.

It is found in the vacuole membrane. Functionally, involved in vacuolar transport and vacuole pH homeostasis. Also required for cytokinesis. The chain is Protein btn1 (btn1) from Aspergillus fumigatus (strain ATCC MYA-4609 / CBS 101355 / FGSC A1100 / Af293) (Neosartorya fumigata).